The primary structure comprises 125 residues: Histone H2B type 1 (125 aa).

The tract at residues 1-36 (MPEPAKSRPAPKKGSKKAVTKAQKKDGKERKRSRKE) is disordered. An N-acetylproline modification is found at Pro-2. Residue Glu-3 is modified to ADP-ribosyl glutamic acid. Lys-6 carries the post-translational modification N6-(2-hydroxyisobutyryl)lysine; alternate. Lys-6 is modified (N6-(beta-hydroxybutyryl)lysine; alternate). Position 6 is an N6-acetyllysine; alternate (Lys-6). Residue Lys-6 is modified to N6-butyryllysine; alternate. N6-crotonyllysine; alternate is present on Lys-6. Lys-6 bears the N6-lactoyllysine; alternate mark. A Glycyl lysine isopeptide (Lys-Gly) (interchain with G-Cter in SUMO2); alternate cross-link involves residue Lys-6. Residue Ser-7 is modified to ADP-ribosylserine. Residues 9–19 (PAPKKGSKKAV) are compositionally biased toward basic residues. Residue Lys-12 is modified to N6-(beta-hydroxybutyryl)lysine; alternate. An N6-acetyllysine; alternate mark is found at Lys-12 and Lys-13. N6-crotonyllysine; alternate is present on residues Lys-12 and Lys-13. N6-lactoyllysine; alternate is present on Lys-12. Lys-13 carries the post-translational modification N6-(2-hydroxyisobutyryl)lysine; alternate. At Ser-15 the chain carries Phosphoserine; by STK4/MST1. N6-acetyllysine; alternate is present on residues Lys-16, Lys-17, Lys-21, and Lys-24. An N6-crotonyllysine; alternate mark is found at Lys-16, Lys-17, Lys-21, and Lys-24. N6-lactoyllysine; alternate occurs at positions 16, 17, 21, and 24. Lys-17 carries the post-translational modification N6-glutaryllysine; alternate. An N6-(2-hydroxyisobutyryl)lysine; alternate mark is found at Lys-21 and Lys-24. The residue at position 21 (Lys-21) is an N6-(beta-hydroxybutyryl)lysine; alternate. Position 21 is an N6-butyryllysine; alternate (Lys-21). Lys-21 is covalently cross-linked (Glycyl lysine isopeptide (Lys-Gly) (interchain with G-Cter in SUMO2); alternate). Lys-25 is modified (N6-(2-hydroxyisobutyryl)lysine). The residue at position 35 (Lys-35) is an N6-(2-hydroxyisobutyryl)lysine; alternate. Lys-35 is modified (N6-(beta-hydroxybutyryl)lysine; alternate). Lys-35 carries the post-translational modification N6-crotonyllysine; alternate. Lys-35 bears the N6-glutaryllysine; alternate mark. Lys-35 is subject to N6-succinyllysine; alternate. A Glycyl lysine isopeptide (Lys-Gly) (interchain with G-Cter in ubiquitin); alternate cross-link involves residue Lys-35. Glu-36 carries the post-translational modification PolyADP-ribosyl glutamic acid. Residue Ser-37 is modified to Phosphoserine; by AMPK. 3 positions are modified to N6-(2-hydroxyisobutyryl)lysine; alternate: Lys-44, Lys-47, and Lys-58. Residue Lys-44 is modified to N6-lactoyllysine; alternate. 2 positions are modified to N6-glutaryllysine; alternate: Lys-44 and Lys-47. Position 47 is an N6-methyllysine; alternate (Lys-47). Lys-58 is modified (N6,N6-dimethyllysine; alternate). Arg-79 is modified (dimethylated arginine). The residue at position 85 (Lys-85) is an N6-(2-hydroxyisobutyryl)lysine; alternate. Lys-85 is subject to N6-acetyllysine; alternate. Position 85 is an N6-lactoyllysine; alternate (Lys-85). The residue at position 85 (Lys-85) is an N6,N6,N6-trimethyllysine; alternate. Omega-N-methylarginine is present on residues Arg-86 and Arg-92. An N6-(2-hydroxyisobutyryl)lysine; alternate modification is found at Lys-108. At Lys-108 the chain carries N6-lactoyllysine; alternate. Position 108 is an N6-glutaryllysine; alternate (Lys-108). Residue Lys-108 is modified to N6-methyllysine; alternate. Ser-112 carries O-linked (GlcNAc) serine glycosylation. Phosphothreonine is present on Thr-115. Residues Lys-116 and Lys-120 each carry the N6-(2-hydroxyisobutyryl)lysine; alternate modification. At Lys-116 the chain carries N6-(beta-hydroxybutyryl)lysine; alternate. An N6-lactoyllysine; alternate mark is found at Lys-116 and Lys-120. 2 positions are modified to N6-glutaryllysine; alternate: Lys-116 and Lys-120. An N6-succinyllysine; alternate mark is found at Lys-116 and Lys-120. Residue Lys-116 is modified to N6-methylated lysine; alternate. A Glycyl lysine isopeptide (Lys-Gly) (interchain with G-Cter in ubiquitin); alternate cross-link involves residue Lys-120.

The protein belongs to the histone H2B family. In terms of assembly, the nucleosome is a histone octamer containing two molecules each of H2A, H2B, H3 and H4 assembled in one H3-H4 heterotetramer and two H2A-H2B heterodimers. The octamer wraps approximately 147 bp of DNA. In terms of processing, monoubiquitination at Lys-35 (H2BK34Ub) by the MSL1/MSL2 dimer is required for histone H3 'Lys-4' (H3K4me) and 'Lys-79' (H3K79me) methylation and transcription activation at specific gene loci, such as HOXA9 and MEIS1 loci. Similarly, monoubiquitination at Lys-120 (H2BK120Ub) by the RNF20/40 complex gives a specific tag for epigenetic transcriptional activation and is also prerequisite for histone H3 'Lys-4' and 'Lys-79' methylation. It also functions cooperatively with the FACT dimer to stimulate elongation by RNA polymerase II. H2BK120Ub also acts as a regulator of mRNA splicing: deubiquitination by USP49 is required for efficient cotranscriptional splicing of a large set of exons. Phosphorylated on Ser-15 (H2BS14ph) by STK4/MST1 during apoptosis; which facilitates apoptotic chromatin condensation. Also phosphorylated on Ser-15 in response to DNA double strand breaks (DSBs), and in correlation with somatic hypermutation and immunoglobulin class-switch recombination. Phosphorylation at Ser-37 (H2BS36ph) by AMPK in response to stress promotes transcription. Post-translationally, ADP-ribosylated by PARP1 or PARP2 on Ser-7 (H2BS6ADPr) in response to DNA damage. H2BS6ADPr promotes recruitment of CHD1L. Mono-ADP-ribosylated on Glu-3 (H2BE2ADPr) by PARP3 in response to single-strand breaks. Poly ADP-ribosylation on Glu-36 (H2BE35ADPr) by PARP1 regulates adipogenesis: it inhibits phosphorylation at Ser-37 (H2BS36ph), thereby blocking expression of pro-adipogenetic genes. In terms of processing, crotonylation (Kcr) is specifically present in male germ cells and marks testis-specific genes in post-meiotic cells, including X-linked genes that escape sex chromosome inactivation in haploid cells. Crotonylation marks active promoters and enhancers and confers resistance to transcriptional repressors. It is also associated with post-meiotically activated genes on autosomes. GlcNAcylation at Ser-112 promotes monoubiquitination of Lys-120. It fluctuates in response to extracellular glucose, and associates with transcribed genes. Post-translationally, lactylated in macrophages by EP300/P300 by using lactoyl-CoA directly derived from endogenous or exogenous lactate, leading to stimulates gene transcription.

It localises to the nucleus. The protein localises to the chromosome. Core component of nucleosome. Nucleosomes wrap and compact DNA into chromatin, limiting DNA accessibility to the cellular machineries which require DNA as a template. Histones thereby play a central role in transcription regulation, DNA repair, DNA replication and chromosomal stability. DNA accessibility is regulated via a complex set of post-translational modifications of histones, also called histone code, and nucleosome remodeling. Its function is as follows. Has broad antibacterial activity. May contribute to the formation of the functional antimicrobial barrier of the colonic epithelium, and to the bactericidal activity of amniotic fluid. The chain is Histone H2B type 1 from Rattus norvegicus (Rat).